Here is a 67-residue protein sequence, read N- to C-terminus: Small ribosomal subunit protein eS17 (67 aa).

This sequence belongs to the eukaryotic ribosomal protein eS17 family. In terms of assembly, part of the 30S ribosomal subunit.

This Thermococcus kodakarensis (strain ATCC BAA-918 / JCM 12380 / KOD1) (Pyrococcus kodakaraensis (strain KOD1)) protein is Small ribosomal subunit protein eS17.